The chain runs to 246 residues: MFYSPLDQFEIKPLLMVNNILTLALTNYTLYLIIVVSIIFGYTSIISNGRLGSTRWGVAIIAIYDTILNLVYSQIGKAGGHFFPLIFTIFNLIFAANLISMIPYSFAISAQLVAIVSFSLALWIGNVILGLYLHGWGFFALFVPSGTPLPLVPILVLIEALSYSSRAISLGLRLGANILSGHLLMLILGSLIVNLMSSSILGFIGGIVPIVAVIAITILEVGIAIIQAYVFSILLSGYIKDSVSLH.

Residues 1-3 (MFY) constitute a propeptide, removed in mature form. The next 7 membrane-spanning stretches (helical) occupy residues 20–40 (ILTLALTNYTLYLIIVVSIIF), 56–76 (WGVAIIAIYDTILNLVYSQIG), 82–102 (FFPLIFTIFNLIFAANLISMI), 112–132 (LVAIVSFSLALWIGNVILGLY), 138–158 (FFALFVPSGTPLPLVPILVLI), 176–196 (ANILSGHLLMLILGSLIVNLM), and 203–223 (FIGGIVPIVAVIAITILEVGI).

The protein belongs to the ATPase A chain family. As to quaternary structure, F-type ATPases have 2 components, CF(1) - the catalytic core - and CF(0) - the membrane proton channel. CF(1) has five subunits: alpha(3), beta(3), gamma(1), delta(1), epsilon(1). CF(0) has three main subunits: a, b and c.

The protein resides in the mitochondrion inner membrane. In terms of biological role, mitochondrial membrane ATP synthase (F(1)F(0) ATP synthase or Complex V) produces ATP from ADP in the presence of a proton gradient across the membrane which is generated by electron transport complexes of the respiratory chain. F-type ATPases consist of two structural domains, F(1) - containing the extramembraneous catalytic core and F(0) - containing the membrane proton channel, linked together by a central stalk and a peripheral stalk. During catalysis, ATP synthesis in the catalytic domain of F(1) is coupled via a rotary mechanism of the central stalk subunits to proton translocation. Key component of the proton channel; it may play a direct role in the translocation of protons across the membrane. This Candida albicans (strain SC5314 / ATCC MYA-2876) (Yeast) protein is ATP synthase subunit a (ATP6).